Reading from the N-terminus, the 363-residue chain is UDP-3-O-acylglucosamine N-acyltransferase (363 aa).

H252 functions as the Proton acceptor in the catalytic mechanism.

Belongs to the transferase hexapeptide repeat family. LpxD subfamily. As to quaternary structure, homotrimer.

It catalyses the reaction a UDP-3-O-[(3R)-3-hydroxyacyl]-alpha-D-glucosamine + a (3R)-hydroxyacyl-[ACP] = a UDP-2-N,3-O-bis[(3R)-3-hydroxyacyl]-alpha-D-glucosamine + holo-[ACP] + H(+). It functions in the pathway bacterial outer membrane biogenesis; LPS lipid A biosynthesis. Catalyzes the N-acylation of UDP-3-O-acylglucosamine using 3-hydroxyacyl-ACP as the acyl donor. Is involved in the biosynthesis of lipid A, a phosphorylated glycolipid that anchors the lipopolysaccharide to the outer membrane of the cell. In Cupriavidus taiwanensis (strain DSM 17343 / BCRC 17206 / CCUG 44338 / CIP 107171 / LMG 19424 / R1) (Ralstonia taiwanensis (strain LMG 19424)), this protein is UDP-3-O-acylglucosamine N-acyltransferase.